Consider the following 478-residue polypeptide: ATP synthase subunit beta (478 aa).

Residue 155 to 162 participates in ATP binding; it reads GGAGVGKT.

This sequence belongs to the ATPase alpha/beta chains family. F-type ATPases have 2 components, CF(1) - the catalytic core - and CF(0) - the membrane proton channel. CF(1) has five subunits: alpha(3), beta(3), gamma(1), delta(1), epsilon(1). CF(0) has three main subunits: a(1), b(2) and c(9-12). The alpha and beta chains form an alternating ring which encloses part of the gamma chain. CF(1) is attached to CF(0) by a central stalk formed by the gamma and epsilon chains, while a peripheral stalk is formed by the delta and b chains.

Its subcellular location is the cell inner membrane. The enzyme catalyses ATP + H2O + 4 H(+)(in) = ADP + phosphate + 5 H(+)(out). In terms of biological role, produces ATP from ADP in the presence of a proton gradient across the membrane. The catalytic sites are hosted primarily by the beta subunits. This Fuscovulum blasticum (Rhodobacter blasticus) protein is ATP synthase subunit beta.